Consider the following 256-residue polypeptide: Undecaprenyl-diphosphatase (256 aa).

The next 7 helical transmembrane spans lie at 39–59 (PTDA…AVLV), 77–97 (RTVI…YMLF), 101–121 (FTGG…TGLM), 135–155 (ISTK…LPGV), 176–196 (LMVS…LDCL), 206–226 (LPGA…MDVL), and 233–253 (VSFS…TALP).

Belongs to the UppP family.

It is found in the cell membrane. It carries out the reaction di-trans,octa-cis-undecaprenyl diphosphate + H2O = di-trans,octa-cis-undecaprenyl phosphate + phosphate + H(+). In terms of biological role, catalyzes the dephosphorylation of undecaprenyl diphosphate (UPP). The sequence is that of Undecaprenyl-diphosphatase from Methanothrix thermoacetophila (strain DSM 6194 / JCM 14653 / NBRC 101360 / PT) (Methanosaeta thermophila).